Reading from the N-terminus, the 212-residue chain is Large ribosomal subunit protein bL25 (212 aa).

The tract at residues 181–212 is disordered; sequence LSEPKEEVIEEDVEEVSADVPTVSETEEEDAE. Positions 188-197 are enriched in acidic residues; that stretch reads VIEEDVEEVS.

This sequence belongs to the bacterial ribosomal protein bL25 family. CTC subfamily. As to quaternary structure, part of the 50S ribosomal subunit; part of the 5S rRNA/L5/L18/L25 subcomplex. Contacts the 5S rRNA. Binds to the 5S rRNA independently of L5 and L18.

Its function is as follows. This is one of the proteins that binds to the 5S RNA in the ribosome where it forms part of the central protuberance. In Finegoldia magna (strain ATCC 29328 / DSM 20472 / WAL 2508) (Peptostreptococcus magnus), this protein is Large ribosomal subunit protein bL25.